Consider the following 222-residue polypeptide: von Willebrand factor C domain-containing protein 2-like (222 aa).

The N-terminal stretch at 1-21 is a signal peptide; sequence MALHIHEACILLLVIPGLVTS. VWFC domains follow at residues 51–110 and 114–172; these read KGCV…PECK and NFCE…PVCK.

As to quaternary structure, peripherally associated with AMPAR complex. AMPAR complex consists of an inner core made of 4 pore-forming GluA/GRIA proteins (GRIA1, GRIA2, GRIA3 and GRIA4) and 4 major auxiliary subunits arranged in a twofold symmetry. One of the two pairs of distinct binding sites is occupied either by CNIH2, CNIH3 or CACNG2, CACNG3. The other harbors CACNG2, CACNG3, CACNG4, CACNG8 or GSG1L. This inner core of AMPAR complex is complemented by outer core constituents binding directly to the GluA/GRIA proteins at sites distinct from the interaction sites of the inner core constituents. Outer core constituents include at least PRRT1, PRRT2, CKAMP44/SHISA9, FRRS1L and NRN1. The proteins of the inner and outer core serve as a platform for other, more peripherally associated AMPAR constituents, including VWC2L. Alone or in combination, these auxiliary subunits control the gating and pharmacology of the AMPAR complex and profoundly impact their biogenesis and protein processing. As to expression, predominantly expressed in the brain (at protein level). Also detected in bones, including femur and calvaria, heart, lung and kidney. Isoform 5 is predominant in lung and heart, compared to isoforms 1 and 3. Isoform 4 is expressed in femur and calvaria at higher levels than isoforms 1 and 5. Isoforms 1 and 4 are expressed at higher levels than isoform 5 in kidney and brain.

The protein resides in the secreted. The protein localises to the synapse. Its function is as follows. May play a role in neurogenesis. May promote matrix mineralization, but has been shown to weakly, but significantly inhibit BMP2 and BMP6 activity in a preosteoblastic cell line. The protein is von Willebrand factor C domain-containing protein 2-like (Vwc2l) of Mus musculus (Mouse).